Reading from the N-terminus, the 200-residue chain is Protein DMP7 (200 aa).

4 consecutive transmembrane segments (helical) span residues 37-57, 69-89, 129-149, and 167-187; these read LSNL…PVLT, WLTC…SFTD, ILDF…SMFD, and ILTS…LAFP.

The protein belongs to the plant DMP1 protein family. As to expression, expressed in leaves, stems, flowers, siliques and roots, especially in the vasculature.

The protein localises to the endoplasmic reticulum membrane. Involved in membrane remodeling. In Arabidopsis thaliana (Mouse-ear cress), this protein is Protein DMP7.